A 93-amino-acid polypeptide reads, in one-letter code: Small ribosomal subunit protein uS19 (93 aa).

The protein belongs to the universal ribosomal protein uS19 family.

Its function is as follows. Protein S19 forms a complex with S13 that binds strongly to the 16S ribosomal RNA. This is Small ribosomal subunit protein uS19 from Alkaliphilus oremlandii (strain OhILAs) (Clostridium oremlandii (strain OhILAs)).